The primary structure comprises 148 residues: Thiol-disulfide oxidoreductase YkuV (148 aa).

Positions 2–145 (KLRQPMPELT…LEKRVNRVLA (144 aa)) constitute a Thioredoxin domain. The cysteines at positions 41 and 44 are disulfide-linked.

In terms of assembly, monomer.

It is found in the cytoplasm. Functionally, participates in various redox reactions through the reversible oxidation of its active center dithiol to a disulfide and catalyzes dithiol-disulfide exchange reactions. The sequence is that of Thiol-disulfide oxidoreductase YkuV (ykuV) from Bacillus subtilis (strain 168).